The sequence spans 585 residues: Putative lipase ATG15 (585 aa).

A helical; Signal-anchor for type II membrane protein transmembrane segment spans residues 1–21; the sequence is MMGLDLLVSLLALSVSPCIAA. At 22-585 the chain is on the lumenal side; sequence TRSPLQIPVL…SASPPITSPP (564 aa). N-linked (GlcNAc...) asparagine glycosylation is found at asparagine 171, asparagine 193, and asparagine 275. Serine 291 acts as the Charge relay system in catalysis. Asparagine 340 and asparagine 437 each carry an N-linked (GlcNAc...) asparagine glycan. The disordered stretch occupies residues 500–526; sequence TTTSTVPTASPAPTITPTSPPTTTAST.

It belongs to the AB hydrolase superfamily. Lipase family. As to quaternary structure, binds to both phosphatidylinositol (PI) and phosphatidylinositol 3,5-bisphosphate (PIP2).

It localises to the endosome. Its subcellular location is the multivesicular body membrane. It is found in the prevacuolar compartment membrane. The catalysed reaction is a triacylglycerol + H2O = a diacylglycerol + a fatty acid + H(+). Lipase which is essential for lysis of subvacuolar cytoplasm to vacuole targeted bodies and intravacuolar autophagic bodies. Involved in the lysis of intravacuolar multivesicular body (MVB) vesicles. The intravacuolar membrane disintegration by ATG15 is critical to life span extension. The protein is Putative lipase ATG15 (ATG15) of Ajellomyces capsulatus (strain NAm1 / WU24) (Darling's disease fungus).